An 83-amino-acid chain; its full sequence is Kunitz-type serine protease inhibitor TCI (83 aa).

Positions 1 to 25 are cleaved as a signal peptide; the sequence is MSSGRLLLLLGLLTLWAELTPVSGL. A BPTI/Kunitz inhibitor domain is found at 31 to 81; that stretch reads CELPAVSGFCKAYIPSFYYNPDASACQKFIYGGCGGNANKFKTIEECHRTC. 3 disulfides stabilise this stretch: C31–C81, C40–C64, and C56–C77.

Expressed by the venom gland.

Its subcellular location is the secreted. Serine protease inhibitor that strongly inhibits chymotrypsin (Ki=84.6 nM) and trypsin (Ki=391 nM). This Ophiophagus hannah (King cobra) protein is Kunitz-type serine protease inhibitor TCI.